Here is a 456-residue protein sequence, read N- to C-terminus: Cysteine--tRNA ligase (456 aa).

Cysteine 28 is a binding site for Zn(2+). The 'HIGH' region signature appears at 30-40 (ITVYDHCHLGH). Zn(2+) contacts are provided by cysteine 209, histidine 234, and glutamate 238. The 'KMSKS' region motif lies at 266-270 (KMAKS). Lysine 269 contributes to the ATP binding site.

The protein belongs to the class-I aminoacyl-tRNA synthetase family. Monomer. Zn(2+) serves as cofactor.

It is found in the cytoplasm. It catalyses the reaction tRNA(Cys) + L-cysteine + ATP = L-cysteinyl-tRNA(Cys) + AMP + diphosphate. This chain is Cysteine--tRNA ligase, found in Legionella pneumophila (strain Corby).